Consider the following 295-residue polypeptide: Iron-sulfur cluster carrier protein (295 aa).

38 to 45 (GKGGVGKS) serves as a coordination point for ATP.

This sequence belongs to the Mrp/NBP35 ATP-binding proteins family. In terms of assembly, homodimer.

Binds and transfers iron-sulfur (Fe-S) clusters to target apoproteins. Can hydrolyze ATP. The polypeptide is Iron-sulfur cluster carrier protein (Pyrococcus furiosus (strain ATCC 43587 / DSM 3638 / JCM 8422 / Vc1)).